Consider the following 484-residue polypeptide: uncharacterized protein (484 aa).

12 helical membrane passes run 19-39 (LSFG…MIFV), 78-98 (VNWG…WLIV), 110-130 (LFFM…GFII), 134-154 (IFAI…SNYL), 165-185 (FSPF…AGII), 199-219 (IVFL…IILG), 249-269 (TWYW…PFTF), 289-309 (ISVF…TIGL), 321-341 (ISTI…VFVL), 360-380 (LFLF…GVML), 398-418 (FGLI…ITSL), and 440-460 (LGAY…LALL).

Its subcellular location is the cell membrane. This is an uncharacterized protein from Mesomycoplasma hyopneumoniae (strain J / ATCC 25934 / NCTC 10110) (Mycoplasma hyopneumoniae).